The primary structure comprises 345 residues: Papain (345 aa).

Residues Met1 to Phe18 form the signal peptide. The propeptide at Val19 to Asn133 is activation peptide. 3 disulfides stabilise this stretch: Cys155–Cys196, Cys189–Cys228, and Cys286–Cys333. The active site involves Cys158. Cys158 provides a ligand contact to E64. Cys158 contacts leupeptin. Residues His292 and Asn308 contribute to the active site.

The protein belongs to the peptidase C1 family.

It catalyses the reaction Hydrolysis of proteins with broad specificity for peptide bonds, but preference for an amino acid bearing a large hydrophobic side chain at the P2 position. Does not accept Val in P1'.. Repressed by the active-site-directed cysteine protease inhibitor E64 (L-trans-epoxysuccinyl-leucylamide-(4-guanido)-butane) produced by Aspergillus japonicus. Inhibited by the inhibitor of cysteine proteases from Trypanosoma brucei (TbICP, rhodesain) and Colocasia esculenta cv. Kaohsiung no. 1 (CeCPI, tarocystatin). Repressed by leupeptin, a peptidic cysteine, serine and threonine protease inhibitor. Its function is as follows. Cysteine proteinase with a high level of diversity in substrate specificity, an amino acid bearing a large hydrophobic side chain at the P2 position is preferred. This chain is Papain, found in Carica papaya (Papaya).